A 118-amino-acid chain; its full sequence is ATP-dependent Clp protease adapter protein ClpS (118 aa).

The tract at residues 1–24 is disordered; sequence MNGSSNSGSPGGGQTGDDDGTGFD.

The protein belongs to the ClpS family. As to quaternary structure, binds to the N-terminal domain of the chaperone ClpA.

Involved in the modulation of the specificity of the ClpAP-mediated ATP-dependent protein degradation. This Hyphomonas neptunium (strain ATCC 15444) protein is ATP-dependent Clp protease adapter protein ClpS.